The chain runs to 76 residues: Vasotab-TY1 (76 aa).

The N-terminal stretch at 1 to 21 is a signal peptide; that stretch reads MKFTLFSVLVVLLIATFVAAD. The Kazal-like domain maps to 22–76; that stretch reads DCPRICTADFRPVCGTPSGGRRSANRTFGNQCSLDSHNCLNKGDTYDKLHDGECK. Intrachain disulfides connect C23/C60, C27/C53, and C35/C75.

Expressed by the salivary gland.

It localises to the secreted. Functionally, vasodilator protein that inhibits vasoconstriction of isolated rat femoral artery induced by phenylephrine. Since platelet aggregation and vasoconstriction are key hemostatic responses, particularly in small wounds, this protein likely participates in the antihemostatic responses during blood feeding. Blocks L-type calcium channels (Cav1/CACNA1) in left ventricular myocytes isolated from rat hearts. The polypeptide is Vasotab-TY1 (Tabanus yao (Horsefly)).